The sequence spans 310 residues: Methionyl-tRNA formyltransferase (310 aa).

(6S)-5,6,7,8-tetrahydrofolate is bound at residue 114 to 117; that stretch reads SLLP.

The protein belongs to the Fmt family.

The enzyme catalyses L-methionyl-tRNA(fMet) + (6R)-10-formyltetrahydrofolate = N-formyl-L-methionyl-tRNA(fMet) + (6S)-5,6,7,8-tetrahydrofolate + H(+). Its function is as follows. Attaches a formyl group to the free amino group of methionyl-tRNA(fMet). The formyl group appears to play a dual role in the initiator identity of N-formylmethionyl-tRNA by promoting its recognition by IF2 and preventing the misappropriation of this tRNA by the elongation apparatus. The sequence is that of Methionyl-tRNA formyltransferase from Granulibacter bethesdensis (strain ATCC BAA-1260 / CGDNIH1).